Here is a 547-residue protein sequence, read N- to C-terminus: MNAPIIDPLQGDFPEVIEEYLEHGVIKCVAFNHRGSLLAAGCADGGCVIWDFETRGIAKEIRDNDCSAAITSVSWSKYGHRLLVSAADKSLTLWDVSTGEKIARTILQQTPLQARLNPGLSSPSLCLACPLSSAPMIVDFDIDCTTLLPVSVPEMPDVLAPPQRSKCPESNPPFSPAAACFNKCGDLVYIGNSKGEILIVDYKSVRVLALVSASGAAPVKNIVFSRNGQYLLTNSHDRTIRIYENLLPAKNVLKSLEDLGKNIDGLDGIEKMKTVGSKCLTLFREFQDSVTKMHWKAPCFSGDGEWVVGGSACKGEHKIYIWDRAGHLVKILEGPKEALIDLAWHPVHPIIVSVSLAGLVYIWAKDYTENWSAFAPDFKELEENEEYVEREDEFDLIPETEKVKVLDVNEDEEVDIDTVEKDAFSDSDMSVEELRYLPAEPIPDTNDQQDNLVESIKLIEGQISASPASEEAGQNGHHASSPQAEEMGETRGKRKRKPSEKAMELQAEKAKPLKGSGKTVRAKNRAAFDQETDDSINGGDDDDDAYY.

WD repeat units follow at residues 21-60, 65-104, 214-253, 285-332, and 334-373; these read LEHG…IAKE, DCSA…KIAR, SGAA…KNVL, EFQD…VKIL, and GPKE…NWSA. The disordered stretch occupies residues 466–547; it reads SPASEEAGQN…GGDDDDDAYY (82 aa). Basic and acidic residues predominate over residues 499-511; it reads SEKAMELQAEKAK. The span at 530–547 shows a compositional bias: acidic residues; it reads QETDDSINGGDDDDDAYY.

In terms of assembly, part of a complex composed of TRO, RBL and WDR5A. Interacts with TRO and WDR5A, but not with WDR5B. This complex is formed during both vegetative and reproductive development. As to expression, strongly expressed in root tips, shoot apices, vascular tissues, developing embryos and endosperms.

The protein resides in the nucleus. Promotes the expression of FLC and FLC homologs to repress the floral transition. Promotes WRKY70 and LTP7 genes epigenetic methylation (e.g. H3K4me3) and subsequent expression. This Arabidopsis thaliana (Mouse-ear cress) protein is Protein RBL.